A 610-amino-acid chain; its full sequence is Oxidoreductase ptaE (610 aa).

Positions 1-20 (MFQSILFLAFYGRPVFGSAA) are cleaved as a signal peptide. Plastocyanin-like domains lie at 67–181 (QIIS…HGPS) and 191–344 (PWLL…IVRY). Residues Asn-105, Asn-111, Asn-262, Asn-277, Asn-330, Asn-356, Asn-401, Asn-409, Asn-427, and Asn-602 are each glycosylated (N-linked (GlcNAc...) asparagine). The region spanning 425 to 568 (YVNWSEPSVK…IAIQFLEQPS (144 aa)) is the Plastocyanin-like 3 domain.

Belongs to the multicopper oxidase family.

Its pathway is secondary metabolite biosynthesis. Its function is as follows. Oxidoreductase; part of the gene cluster that mediates the biosynthesis of pestheic acid, a diphenyl ether which is a biosynthetic precursor of the unique chloropupukeananes. The biosynthesis initiates from condensation of acetate and malonate units catalyzed by the non-reducing PKS ptaA. As the ptaA protein is TE/CLC domain-deficient, hydrolysis and Claisen cyclization of the polyketide could be catalyzed by ptaB containing a beta-lactamase domain. The ptaB protein might hydrolyze the thioester bond between the ACP of ptaA and the intermediate to release atrochrysone carboxylic acid, which is spontaneously dehydrated to form endocrocin anthrone. Endocrocin anthrone is then converted to endocrocin, catalyzed by the anthrone oxygenase ptaC. Spontaneous decarboxylation of endocrocin occurs to generate emodin. An O-methyltransferase (ptaH or ptaI) could methylate emodin to form physcion. PtaJ could then catalyze the oxidative cleavage of physcion, and rotation of the intermediate could then afford desmethylisosulochrin. PtaF, a putative NADH-dependent oxidoreductase, might also participate in the oxidative cleavage step. Desmethylisosulochrin is then transformed by another O-methyltransferase (ptaH or ptaI) to form isosulochrin. Chlorination of isosulochrin by ptaM in the cyclohexadienone B ring then produces chloroisosulochrin. PtaE is responsible for the oxidative coupling reactions of both benzophenones isosulouchrin and chloroisosulochrin to RES-1214-1 and pestheic acid respectively, regardless of chlorination. The sequence is that of Oxidoreductase ptaE from Pestalotiopsis fici (strain W106-1 / CGMCC3.15140).